The chain runs to 353 residues: Photosystem II D2 protein (353 aa).

At Thr-2 the chain carries N-acetylthreonine. Thr-2 carries the post-translational modification Phosphothreonine. The helical transmembrane segment at 41–61 (CAYFAVGGWFTGTTFVTSWYT) threads the bilayer. A chlorophyll a-binding site is contributed by His-118. The chain crosses the membrane as a helical span at residues 125–141 (GFMLRQFELARSVQLRP). Gln-130 and Asn-143 together coordinate pheophytin a. A helical transmembrane segment spans residues 153-166 (VFVSVFLIYPLGQS). His-198 contacts chlorophyll a. A helical membrane pass occupies residues 208–228 (AALLCAIHGATVENTLFEDGD). 2 residues coordinate a plastoquinone: His-215 and Phe-262. Residue His-215 participates in Fe cation binding. Fe cation is bound at residue His-269. A helical membrane pass occupies residues 279-295 (GLWMSALGVVGLALNLR).

This sequence belongs to the reaction center PufL/M/PsbA/D family. In terms of assembly, PSII is composed of 1 copy each of membrane proteins PsbA, PsbB, PsbC, PsbD, PsbE, PsbF, PsbH, PsbI, PsbJ, PsbK, PsbL, PsbM, PsbT, PsbX, PsbY, PsbZ, Psb30/Ycf12, at least 3 peripheral proteins of the oxygen-evolving complex and a large number of cofactors. It forms dimeric complexes. The D1/D2 heterodimer binds P680, chlorophylls that are the primary electron donor of PSII, and subsequent electron acceptors. It shares a non-heme iron and each subunit binds pheophytin, quinone, additional chlorophylls, carotenoids and lipids. There is also a Cl(-1) ion associated with D1 and D2, which is required for oxygen evolution. The PSII complex binds additional chlorophylls, carotenoids and specific lipids. serves as cofactor.

The protein localises to the plastid. Its subcellular location is the chloroplast thylakoid membrane. The catalysed reaction is 2 a plastoquinone + 4 hnu + 2 H2O = 2 a plastoquinol + O2. Its function is as follows. Photosystem II (PSII) is a light-driven water:plastoquinone oxidoreductase that uses light energy to abstract electrons from H(2)O, generating O(2) and a proton gradient subsequently used for ATP formation. It consists of a core antenna complex that captures photons, and an electron transfer chain that converts photonic excitation into a charge separation. The D1/D2 (PsbA/PsbD) reaction center heterodimer binds P680, the primary electron donor of PSII as well as several subsequent electron acceptors. D2 is needed for assembly of a stable PSII complex. The sequence is that of Photosystem II D2 protein from Atropa belladonna (Belladonna).